The chain runs to 89 residues: uncharacterized protein (89 aa).

This is an uncharacterized protein from Geobacillus stearothermophilus (Bacillus stearothermophilus).